The sequence spans 443 residues: Threonine/serine transporter TdcC (443 aa).

The next 11 membrane-spanning stretches (helical) occupy residues threonine 22–isoleucine 42, alanine 44–phenylalanine 64, glycine 97–valine 117, phenylalanine 140–methionine 160, valine 163–isoleucine 183, isoleucine 207–isoleucine 227, alanine 259–serine 279, alanine 319–leucine 339, isoleucine 366–leucine 386, isoleucine 389–isoleucine 409, and aspartate 423–phenylalanine 443.

It belongs to the amino acid/polyamine transporter 2 family. SdaC/TdcC subfamily.

It is found in the cell inner membrane. The catalysed reaction is L-threonine(in) + H(+)(in) = L-threonine(out) + H(+)(out). The enzyme catalyses L-serine(in) + H(+)(in) = L-serine(out) + H(+)(out). Its function is as follows. Involved in the import of threonine and serine into the cell, with the concomitant import of a proton (symport system). The protein is Threonine/serine transporter TdcC of Salmonella paratyphi A (strain ATCC 9150 / SARB42).